We begin with the raw amino-acid sequence, 204 residues long: Urease accessory protein UreG (204 aa).

A GTP-binding site is contributed by Gly10–Thr17.

This sequence belongs to the SIMIBI class G3E GTPase family. UreG subfamily. As to quaternary structure, homodimer. UreD, UreF and UreG form a complex that acts as a GTP-hydrolysis-dependent molecular chaperone, activating the urease apoprotein by helping to assemble the nickel containing metallocenter of UreC. The UreE protein probably delivers the nickel.

The protein localises to the cytoplasm. Functionally, facilitates the functional incorporation of the urease nickel metallocenter. This process requires GTP hydrolysis, probably effectuated by UreG. The chain is Urease accessory protein UreG from Bacillus sp. (strain TB-90).